A 339-amino-acid polypeptide reads, in one-letter code: D-erythrose-4-phosphate dehydrogenase (339 aa).

Residues 12 to 13 (RI) and Arg-81 each bind NAD(+). Substrate is bound by residues 154 to 156 (SCT), Arg-200, 213 to 214 (TK), and Arg-236. The active-site Nucleophile is Cys-155. Asn-318 serves as a coordination point for NAD(+).

It belongs to the glyceraldehyde-3-phosphate dehydrogenase family. Epd subfamily. Homotetramer.

It localises to the cytoplasm. It carries out the reaction D-erythrose 4-phosphate + NAD(+) + H2O = 4-phospho-D-erythronate + NADH + 2 H(+). The protein operates within cofactor biosynthesis; pyridoxine 5'-phosphate biosynthesis; pyridoxine 5'-phosphate from D-erythrose 4-phosphate: step 1/5. Its function is as follows. Catalyzes the NAD-dependent conversion of D-erythrose 4-phosphate to 4-phosphoerythronate. This chain is D-erythrose-4-phosphate dehydrogenase, found in Escherichia coli (strain UTI89 / UPEC).